The following is a 121-amino-acid chain: uncharacterized protein (121 aa).

Its subcellular location is the mitochondrion. This is an uncharacterized protein from Arabidopsis thaliana (Mouse-ear cress).